The following is a 347-amino-acid chain: Inosamine-phosphate amidinotransferase 1 (347 aa).

Catalysis depends on residues Asp179 and His227. The active-site Amidino-cysteine intermediate is the Cys332.

This sequence belongs to the amidinotransferase family. Homodimer.

The enzyme catalyses 1-amino-1-deoxy-scyllo-inositol 4-phosphate + L-arginine = 1-guanidino-1-deoxy-scyllo-inositol 4-phosphate + L-ornithine. Its pathway is antibiotic biosynthesis; streptomycin biosynthesis. Its function is as follows. Catalyzes two non-consecutive transamidination reactions. It converts scyllo-inosamine 4-phosphate into N-amidino-scyllo-inosamine 4-phosphate and N1-amidinostreptamine 6-phosphate into streptidine 6-phosphate. The chain is Inosamine-phosphate amidinotransferase 1 (strB1) from Streptomyces griseus.